A 392-amino-acid chain; its full sequence is Formate-dependent phosphoribosylglycinamide formyltransferase (392 aa).

Residues 22–23 (EL) and Glu82 contribute to the N(1)-(5-phospho-beta-D-ribosyl)glycinamide site. ATP contacts are provided by residues Arg114, Lys155, 160-165 (SSGKGQ), 195-198 (EGVV), and Glu203. Positions 119–308 (RLAAEELGLP…EFALHVRAFL (190 aa)) constitute an ATP-grasp domain. Residues Glu267 and Glu279 each contribute to the Mg(2+) site. N(1)-(5-phospho-beta-D-ribosyl)glycinamide is bound by residues Asp286, Lys355, and 362-363 (RR).

Belongs to the PurK/PurT family. Homodimer.

The catalysed reaction is N(1)-(5-phospho-beta-D-ribosyl)glycinamide + formate + ATP = N(2)-formyl-N(1)-(5-phospho-beta-D-ribosyl)glycinamide + ADP + phosphate + H(+). It functions in the pathway purine metabolism; IMP biosynthesis via de novo pathway; N(2)-formyl-N(1)-(5-phospho-D-ribosyl)glycinamide from N(1)-(5-phospho-D-ribosyl)glycinamide (formate route): step 1/1. In terms of biological role, involved in the de novo purine biosynthesis. Catalyzes the transfer of formate to 5-phospho-ribosyl-glycinamide (GAR), producing 5-phospho-ribosyl-N-formylglycinamide (FGAR). Formate is provided by PurU via hydrolysis of 10-formyl-tetrahydrofolate. The polypeptide is Formate-dependent phosphoribosylglycinamide formyltransferase (Salmonella choleraesuis (strain SC-B67)).